An 86-amino-acid polypeptide reads, in one-letter code: Kappa-theraphotoxin-Cg1a 3 (86 aa).

Residues 1-21 (MKVSVLITLAVLGVMFVWASA) form the signal peptide. Residues 22–50 (AELEERGSDQRDSPAWLKSMERIFRSEER) constitute a propeptide that is removed on maturation. Intrachain disulfides connect Cys-52–Cys-66, Cys-59–Cys-71, and Cys-65–Cys-78. Phenylalanine amide is present on Phe-84.

The protein belongs to the neurotoxin 10 (Hwtx-1) family. 28 (Jztx-11) subfamily. In terms of tissue distribution, expressed by the venom gland.

Its subcellular location is the secreted. This toxin acts as a voltage-dependent gating-modifier. It inhibits the sodium conductance (IC(50)=124 nM) and slows the fast inactivation (EC(50)=1180 nM) of Nav1.5/SCN5A. It significantly shifts the activation to more depolarized voltages and decreases the deactivation of Nav1.5 currents upon extreme depolarization, but only slightly affects voltage-dependence of steady-state inactivation. In addition, this toxin causes an approximately five-fold decrease in the rate of recovery from inactivation and an approximately 1.9-fold reduction in the closed-state inactivation rate. This toxin integrates the functions of site 3 toxins (alpha-scorpion toxins) with site 4 toxins (beta-scorpion and spider toxins) by targeting multiple sites on Nav1.5. Also shows inhibition of voltage-gated potassium channels (5 uM completely inhibits Kv2.1/KCNB1, whereas 5 uM moderately inhibits Kv4.2/KCND2 Kv4.1/KCND1 channels). The polypeptide is Kappa-theraphotoxin-Cg1a 3 (Chilobrachys guangxiensis (Chinese earth tiger tarantula)).